A 397-amino-acid chain; its full sequence is Tryptophan synthase beta chain (397 aa).

An N6-(pyridoxal phosphate)lysine modification is found at Lys-91.

Belongs to the TrpB family. As to quaternary structure, tetramer of two alpha and two beta chains. Pyridoxal 5'-phosphate serves as cofactor.

It carries out the reaction (1S,2R)-1-C-(indol-3-yl)glycerol 3-phosphate + L-serine = D-glyceraldehyde 3-phosphate + L-tryptophan + H2O. The protein operates within amino-acid biosynthesis; L-tryptophan biosynthesis; L-tryptophan from chorismate: step 5/5. Its function is as follows. The beta subunit is responsible for the synthesis of L-tryptophan from indole and L-serine. This is Tryptophan synthase beta chain from Bacillus anthracis (strain A0248).